Here is a 111-residue protein sequence, read N- to C-terminus: MANVYDLANELERAVRALPEYQAVLTAKAAIENDADAQVLWQDFLAAQSKVQEMMQSGQMPSQEEQDEMSKLGEKIESNDLLKVYFDHQQRLSVYMSDIEKIVFAPMQDLM.

The protein belongs to the UPF0342 family.

The polypeptide is UPF0342 protein gbs1446 (Streptococcus agalactiae serotype III (strain NEM316)).